Reading from the N-terminus, the 1180-residue chain is MFTLSLLSRGHGKLGQDKQKLEVYFEPEDYLNWRSPEDYVPVSKPQDKNNASQHSWSLFLPKTFSTRKGALILYSEGFAISAWTPKERRKGPYCPRGPWRKLDLELHTLQDLKEAILAYGRQQGEQDRAWQPYLHFRSQLESQAQRQIQPGHSAKRYLRGLLRTWPPDAMYRLWCAGYIKDSVLLQDSQLNVPKKLRPQQDLSGVPPKYHLLPVFPSFWIQQGKSFEQRQQGLDEGEAGAAGHVDQGPLAKNHGSQGTRLPPRRKQPWQEDETQAEDTSIENHLCLYASKESYNEKTQQTSRKAFGHGRIDHSWLPSDKSHITFCGGAFPNRKADLSDKQRNVKLHKARSSHLLQVLPAERSLFPPVASATGSRIITPGEVKKKKAPKALKLPPISEEPPRVLEPLKSQFKANEPPTELFILPVEIHYHTKQPPKEKAHRRGAPHPESEPESSEESTPVWRPPLKHASLETPWELTVHLPVDASRDTLSPQGSSSLPPASLGNLTLKGSKARHTRVHSQGKGVWKGDDDAPPHDVAPPLDLLPPIKGKKSPESQKGVDSPRTSDHNSPPSLPNMRVPRRALPAAQEDSSDPTLGHFLLGPDGEKVCLSLPGHTQTEALPSGKAYESVNSNISHEEEGPSSQHFLKANTEPRANLHMNLYETSPLTQTTEKQGAQQSLEAAAQKTGEPQSCINKALICSNRKEFYTRKLHIDMTPFLKESGNALDYQEEAGRPLRETHHNDQDPEPRSMTLDSPRASRTEHIQTPEADIVQKVGRDYDVHHLHRGLLGYGPESPERLSAVYTSLLPREREGKAEPRLFSQETSANISHERDLINEAKRKEKPKKDKTKGPKSEREGKVYGQAEAAIGKSKDSKAKKKLEKKTRPQRKRTQKERNLEIAAELSGPDVSYEETEDTSNRGSFASDSFVEDPWLSPKYDAQESQVSLDGRSSPSQIATVTGNMESKEERRCEDPSKALLTKREQEKASWDRLRAERAEMRWLEVEKKRREQEEQRQLQQEQLERAKKMEEELELEQQRRTEEIRLRKQRLQEEQQRQEEEERKQQLRLKAAQERARQQQEEFRRKLRELQRKKQQEEAERAEAEKQRQEELEMQLEEEQKHLMEMAEEERLEYQRRKQEAEEKARLEAEERRQKEEEAARLALEEATKQAQEQARYWIFGQQLP.

7 disordered regions span residues 229–280 (RQQG…DTSI), 431–465 (KQPP…PPLK), 484–575 (SRDT…PNMR), 730–758 (GRPL…ASRT), 810–986 (GKAE…ASWD), 1045–1109 (RLQE…ELEM), and 1125–1152 (ERLE…QKEE). The segment covering 269-279 (QEDETQAEDTS) has biased composition (acidic residues). Basic residues predominate over residues 431–443 (KQPPKEKAHRRGA). A compositionally biased stretch (polar residues) spans 486–497 (DTLSPQGSSSLP). Residues 509–518 (SKARHTRVHS) are compositionally biased toward basic residues. Basic and acidic residues-rich tracts occupy residues 730–745 (GRPL…DPEP), 826–837 (SHERDLINEAKR), and 846–856 (TKGPKSEREGK). Residues 872-889 (KAKKKLEKKTRPQRKRTQ) show a composition bias toward basic residues. The span at 937-959 (QESQVSLDGRSSPSQIATVTGNM) shows a compositional bias: polar residues. Composition is skewed to basic and acidic residues over residues 960-986 (ESKE…ASWD), 1045-1106 (RLQE…RQEE), and 1127-1152 (LEYQ…QKEE). Residues 988–1171 (LRAERAEMRW…ATKQAQEQAR (184 aa)) adopt a coiled-coil conformation.

This is an uncharacterized protein from Homo sapiens (Human).